The primary structure comprises 221 residues: Thiamine-phosphate synthase (221 aa).

4-amino-2-methyl-5-(diphosphooxymethyl)pyrimidine-binding positions include 47–51 and Asn-79; that span reads QYREK. Mg(2+)-binding residues include Asp-80 and Asp-99. Residue Thr-118 coordinates 4-amino-2-methyl-5-(diphosphooxymethyl)pyrimidine. Residue 144–146 coordinates 2-[(2R,5Z)-2-carboxy-4-methylthiazol-5(2H)-ylidene]ethyl phosphate; the sequence is SFT. 4-amino-2-methyl-5-(diphosphooxymethyl)pyrimidine is bound at residue Lys-147. 2-[(2R,5Z)-2-carboxy-4-methylthiazol-5(2H)-ylidene]ethyl phosphate contacts are provided by residues Gly-175 and 195–196; that span reads VT.

It belongs to the thiamine-phosphate synthase family. Mg(2+) serves as cofactor.

It carries out the reaction 2-[(2R,5Z)-2-carboxy-4-methylthiazol-5(2H)-ylidene]ethyl phosphate + 4-amino-2-methyl-5-(diphosphooxymethyl)pyrimidine + 2 H(+) = thiamine phosphate + CO2 + diphosphate. It catalyses the reaction 2-(2-carboxy-4-methylthiazol-5-yl)ethyl phosphate + 4-amino-2-methyl-5-(diphosphooxymethyl)pyrimidine + 2 H(+) = thiamine phosphate + CO2 + diphosphate. The catalysed reaction is 4-methyl-5-(2-phosphooxyethyl)-thiazole + 4-amino-2-methyl-5-(diphosphooxymethyl)pyrimidine + H(+) = thiamine phosphate + diphosphate. The protein operates within cofactor biosynthesis; thiamine diphosphate biosynthesis; thiamine phosphate from 4-amino-2-methyl-5-diphosphomethylpyrimidine and 4-methyl-5-(2-phosphoethyl)-thiazole: step 1/1. In terms of biological role, condenses 4-methyl-5-(beta-hydroxyethyl)thiazole monophosphate (THZ-P) and 2-methyl-4-amino-5-hydroxymethyl pyrimidine pyrophosphate (HMP-PP) to form thiamine monophosphate (TMP). This Caldicellulosiruptor saccharolyticus (strain ATCC 43494 / DSM 8903 / Tp8T 6331) protein is Thiamine-phosphate synthase.